The primary structure comprises 396 residues: Elongation factor Tu (396 aa).

Residues 10-206 (KPHCNIGTIG…QVDAYIPQPE (197 aa)) form the tr-type G domain. Residues 19 to 26 (GHVDHGKT) are G1. 19–26 (GHVDHGKT) contributes to the GTP binding site. T26 is a binding site for Mg(2+). The interval 60–64 (GITIS) is G2. The tract at residues 81–84 (DCPG) is G3. Residues 81–85 (DCPGH) and 136–139 (NKVD) each bind GTP. Residues 136–139 (NKVD) are G4. The G5 stretch occupies residues 174–176 (SAL).

Belongs to the TRAFAC class translation factor GTPase superfamily. Classic translation factor GTPase family. EF-Tu/EF-1A subfamily. In terms of assembly, monomer.

Its subcellular location is the cytoplasm. The catalysed reaction is GTP + H2O = GDP + phosphate + H(+). Its function is as follows. GTP hydrolase that promotes the GTP-dependent binding of aminoacyl-tRNA to the A-site of ribosomes during protein biosynthesis. In Gluconobacter oxydans (strain 621H) (Gluconobacter suboxydans), this protein is Elongation factor Tu.